The primary structure comprises 101 residues: Large ribosomal subunit protein uL24 (101 aa).

Belongs to the universal ribosomal protein uL24 family. Part of the 50S ribosomal subunit.

In terms of biological role, one of two assembly initiator proteins, it binds directly to the 5'-end of the 23S rRNA, where it nucleates assembly of the 50S subunit. One of the proteins that surrounds the polypeptide exit tunnel on the outside of the subunit. The chain is Large ribosomal subunit protein uL24 from Streptococcus agalactiae serotype III (strain NEM316).